The following is a 285-amino-acid chain: Sulfotransferase 2A1 (285 aa).

3'-phosphoadenylyl sulfate-binding residues include lysine 44, serine 45, glycine 46, threonine 47, asparagine 48, and tryptophan 49. Catalysis depends on histidine 99, which acts as the Proton acceptor. Residues arginine 121, serine 129, tyrosine 184, serine 218, methionine 223, arginine 247, lysine 248, and glycine 249 each coordinate 3'-phosphoadenylyl sulfate. Residue serine 251 is modified to Phosphoserine.

This sequence belongs to the sulfotransferase 1 family. Homodimer. Predominanly expressed in liver. Detected also in adrenal gland and in jejunum.

It localises to the cytoplasm. The protein resides in the cytosol. The enzyme catalyses an alcohol + 3'-phosphoadenylyl sulfate = an alkyl sulfate + adenosine 3',5'-bisphosphate + H(+). It catalyses the reaction 3beta-hydroxyandrost-5-en-17-one + 3'-phosphoadenylyl sulfate = dehydroepiandrosterone 3-sulfate + adenosine 3',5'-bisphosphate + H(+). The catalysed reaction is taurolithocholate + 3'-phosphoadenylyl sulfate = taurolithocholate 3-sulfate + adenosine 3',5'-bisphosphate + H(+). It carries out the reaction lithocholate + 3'-phosphoadenylyl sulfate = lithocholate sulfate + adenosine 3',5'-bisphosphate + H(+). The enzyme catalyses (24S)-hydroxycholesterol + 3'-phosphoadenylyl sulfate = (24S)-hydroxycholesterol 24-sulfate + adenosine 3',5'-bisphosphate + H(+). It catalyses the reaction (24S)-hydroxycholesterol + 3'-phosphoadenylyl sulfate = (24S)-hydroxycholesterol 3-sulfate + adenosine 3',5'-bisphosphate + H(+). The catalysed reaction is (24S)-hydroxycholesterol 24-sulfate + 3'-phosphoadenylyl sulfate = (24S)-hydroxycholesterol 3,24-disulfate + adenosine 3',5'-bisphosphate + H(+). It carries out the reaction pregnenolone + 3'-phosphoadenylyl sulfate = pregnenolone sulfate + adenosine 3',5'-bisphosphate + H(+). The enzyme catalyses androsterone + 3'-phosphoadenylyl sulfate = androsterone 3alpha-sulfate + adenosine 3',5'-bisphosphate + H(+). Its function is as follows. Sulfotransferase that utilizes 3'-phospho-5'-adenylyl sulfate (PAPS) as sulfonate donor to catalyze the sulfonation of steroids and bile acids in the liver and adrenal glands. Mediates the sulfation of a wide range of steroids and sterols, including pregnenolone, androsterone, DHEA, bile acids, cholesterol and as well many xenobiotics that contain alcohol and phenol functional groups. Sulfonation increases the water solubility of most compounds, and therefore their renal excretion, but it can also result in bioactivation to form active metabolites. Plays an important role in maintening steroid and lipid homeostasis. Plays a key role in bile acid metabolism. In addition, catalyzes the metabolic activation of potent carcinogenic polycyclic arylmethanols. In Macaca fascicularis (Crab-eating macaque), this protein is Sulfotransferase 2A1 (SULT2A1).